A 445-amino-acid polypeptide reads, in one-letter code: Xylose isomerase (445 aa).

Active-site residues include His107 and Asp110. Mg(2+) contacts are provided by Glu238, Glu274, His277, Asp302, Asp313, Asp315, and Asp345.

It belongs to the xylose isomerase family. Homotetramer. Requires Mg(2+) as cofactor.

Its subcellular location is the cytoplasm. It catalyses the reaction alpha-D-xylose = alpha-D-xylulofuranose. The sequence is that of Xylose isomerase (xylA) from Bacillus spizizenii (strain ATCC 23059 / NRRL B-14472 / W23) (Bacillus subtilis subsp. spizizenii).